The primary structure comprises 156 residues: ATP synthase subunit b', chloroplastic (156 aa).

A helical transmembrane segment spans residues 24-44 (ATLPLVAIQFILLMVLLNILL).

It belongs to the ATPase B chain family. F-type ATPases have 2 components, F(1) - the catalytic core - and F(0) - the membrane proton channel. F(1) has five subunits: alpha(3), beta(3), gamma(1), delta(1), epsilon(1). F(0) has four main subunits: a(1), b(1), b'(1) and c(10-14). The alpha and beta chains form an alternating ring which encloses part of the gamma chain. F(1) is attached to F(0) by a central stalk formed by the gamma and epsilon chains, while a peripheral stalk is formed by the delta, b and b' chains.

It is found in the plastid. The protein resides in the chloroplast thylakoid membrane. Its function is as follows. F(1)F(0) ATP synthase produces ATP from ADP in the presence of a proton or sodium gradient. F-type ATPases consist of two structural domains, F(1) containing the extramembraneous catalytic core and F(0) containing the membrane proton channel, linked together by a central stalk and a peripheral stalk. During catalysis, ATP synthesis in the catalytic domain of F(1) is coupled via a rotary mechanism of the central stalk subunits to proton translocation. In terms of biological role, component of the F(0) channel, it forms part of the peripheral stalk, linking F(1) to F(0). The b'-subunit is a diverged and duplicated form of b found in plants and photosynthetic bacteria. In Phaeodactylum tricornutum (strain CCAP 1055/1), this protein is ATP synthase subunit b', chloroplastic.